We begin with the raw amino-acid sequence, 338 residues long: RNA 3'-terminal phosphate cyclase (338 aa).

ATP contacts are provided by residues Gln-103 and 283–287 (YLADQ). The Tele-AMP-histidine intermediate role is filled by His-308.

This sequence belongs to the RNA 3'-terminal cyclase family. Type 1 subfamily.

Its subcellular location is the cytoplasm. The catalysed reaction is a 3'-end 3'-phospho-ribonucleotide-RNA + ATP = a 3'-end 2',3'-cyclophospho-ribonucleotide-RNA + AMP + diphosphate. Catalyzes the conversion of 3'-phosphate to a 2',3'-cyclic phosphodiester at the end of RNA. The mechanism of action of the enzyme occurs in 3 steps: (A) adenylation of the enzyme by ATP; (B) transfer of adenylate to an RNA-N3'P to produce RNA-N3'PP5'A; (C) and attack of the adjacent 2'-hydroxyl on the 3'-phosphorus in the diester linkage to produce the cyclic end product. The biological role of this enzyme is unknown but it is likely to function in some aspects of cellular RNA processing. The polypeptide is RNA 3'-terminal phosphate cyclase (Escherichia coli O45:K1 (strain S88 / ExPEC)).